A 217-amino-acid chain; its full sequence is T-complex protein 10A homolog 1 (217 aa).

Residues methionine 1–alanine 26 form a disordered region. Residues glutamate 7–aspartate 19 are compositionally biased toward basic and acidic residues. Residues alanine 69–serine 110 are a coiled coil. A leucine-zipper region spans residues leucine 75 to leucine 96. Residues glutamate 175–leucine 192 show a composition bias toward basic and acidic residues. The disordered stretch occupies residues glutamate 175 to valine 217.

It belongs to the TCP10 family. As to quaternary structure, self-associates (via leucine zipper). Interacts (via leucine zipper) with ZIPK/DAPK3 (via leucine zipper). Interacts with MAD4.

Its subcellular location is the nucleus. Functionally, may be involved in transcriptional regulation. Has in vitro transcription inhibition activity. This Pan troglodytes (Chimpanzee) protein is T-complex protein 10A homolog 1 (TCP10L).